Reading from the N-terminus, the 240-residue chain is Acyl-protein thioesterase 1 (240 aa).

Catalysis depends on charge relay system residues serine 129, aspartate 183, and histidine 219.

It belongs to the AB hydrolase superfamily. AB hydrolase 2 family.

It localises to the cytoplasm. The protein resides in the nucleus. The catalysed reaction is S-hexadecanoyl-L-cysteinyl-[protein] + H2O = L-cysteinyl-[protein] + hexadecanoate + H(+). Functionally, hydrolyzes fatty acids from S-acylated cysteine residues in proteins with a strong preference for palmitoylated G-alpha proteins over other acyl substrates. Mediates the deacylation of G-alpha proteins such as GPA1 in vivo, but has weak or no activity toward palmitoylated Ras proteins. Has weak lysophospholipase activity in vitro; however such activity may not exist in vivo. The protein is Acyl-protein thioesterase 1 of Mycosarcoma maydis (Corn smut fungus).